Here is an 88-residue protein sequence, read N- to C-terminus: Probable glutaredoxin ssr2061 (88 aa).

The cysteines at positions 15 and 18 are disulfide-linked.

The protein belongs to the glutaredoxin family.

In terms of biological role, has a glutathione-disulfide oxidoreductase activity in the presence of NADPH and glutathione reductase. Reduces low molecular weight disulfides and proteins. The protein is Probable glutaredoxin ssr2061 of Synechocystis sp. (strain ATCC 27184 / PCC 6803 / Kazusa).